The chain runs to 354 residues: MKKEGGGSIITLAACILGLYASFLTWSVLQERISTKPYGSNPDTGSPDFFKAPLVINIIQAFFASIVGLIYSVVSSRSNPLSIFTQNEKPVALKFFKSFVIISLTSSLSSPLGYESLKHVDYLAYLLAKSCKLIPVMLVHFVLYRTKFPLYKCMVAGSVTVGVIIFTLSHSSTKSKADISDGKTALGMAQLIGSMLLDGLTNSTQDQLFKLRGTSPSNKHTKLTGAYLMCILNAFIFINTLAYALIFKYQSEITYTVNFVHHYPQVMMNILEFAILGSVGQVFVFIILEKFDSLILITSTVTRKMISMILSVVLFGHQLNGLQWGGVGLVFGGIGYEALVKMSMNKAPTTKKNQ.

Helical transmembrane passes span 6 to 26, 54 to 74, 95 to 112, 123 to 143, and 148 to 168; these read GGSI…FLTW, LVIN…YSVV, FFKS…SSPL, LAYL…HFVL, and FPLY…IFTL. Asn202 carries an N-linked (GlcNAc...) asparagine glycan. A run of 4 helical transmembrane segments spans residues 227–247, 268–288, 295–317, and 321–340; these read YLMC…ALIF, MNIL…FIIL, ILIT…LFGH, and GLQW…EALV.

Belongs to the nucleotide-sugar transporter family. SLC35B subfamily.

It is found in the endoplasmic reticulum membrane. Its function is as follows. May be involved in specific transport of UDP-Gal from the cytosol to the Golgi lumen. Involved in the maintenance of optimal conditions for the folding of secretory pathway proteins in the endoplasmic reticulum. This chain is UDP-galactose transporter homolog 1 (HUT1), found in Debaryomyces hansenii (strain ATCC 36239 / CBS 767 / BCRC 21394 / JCM 1990 / NBRC 0083 / IGC 2968) (Yeast).